Consider the following 147-residue polypeptide: Methylglyoxal synthase (147 aa).

One can recognise an MGS-like domain in the interval 1–147; sequence MKGQRNIGMV…TPYVKRLGAK (147 aa). Substrate-binding positions include histidine 12, lysine 16, 38–41, and 59–60; these read TGTT and SG. Aspartate 65 (proton donor/acceptor) is an active-site residue. Histidine 92 lines the substrate pocket.

The protein belongs to the methylglyoxal synthase family.

The enzyme catalyses dihydroxyacetone phosphate = methylglyoxal + phosphate. In terms of biological role, catalyzes the formation of methylglyoxal from dihydroxyacetone phosphate. This Oleidesulfovibrio alaskensis (strain ATCC BAA-1058 / DSM 17464 / G20) (Desulfovibrio alaskensis) protein is Methylglyoxal synthase.